A 1157-amino-acid polypeptide reads, in one-letter code: Hephaestin (1157 aa).

A signal peptide spans 1–23; sequence MKAGHLLWALLLMHSLCSLPTDG. Plastocyanin-like domains follow at residues 24–206, 218–366, 370–559, 569–717, 730–902, and 910–1066; these read AIRN…LITC, QRKD…VDSC, PPVE…LLVC, KQKG…VSQC, ASRV…LVIC, and NGGR…SHEE. Over 24–1109 the chain is Extracellular; the sequence is AIRNYYLGIQ…PVKNVEILSS (1086 aa). Residues asparagine 49 and asparagine 54 are each glycosylated (N-linked (GlcNAc...) asparagine). 2 residues coordinate Na(+): glycine 70 and tyrosine 73. Residues histidine 126 and histidine 128 each coordinate Cu(2+). Histidine 126 contributes to the O2 binding site. Lysine 134, aspartate 152, and aspartate 153 together coordinate Ca(2+). Residue asparagine 164 is glycosylated (N-linked (GlcNAc...) asparagine). Cysteines 180 and 206 form a disulfide. Histidine 186 and histidine 188 together coordinate Cu(2+). Histidine 186 is a binding site for O2. Asparagine 236 is a glycosylation site (N-linked (GlcNAc...) asparagine). Position 265 (serine 265) interacts with Na(+). The cysteines at positions 285 and 366 are disulfide-linked. Positions 304, 347, and 352 each coordinate Cu(2+). 3 residues coordinate Na(+): tyrosine 416, glycine 425, and tyrosine 428. A disulfide bridge connects residues cysteine 533 and cysteine 559. Asparagine 587 carries an N-linked (GlcNAc...) asparagine glycan. Serine 616 contributes to the Na(+) binding site. A disulfide bond links cysteine 636 and cysteine 717. 4 residues coordinate Cu(2+): histidine 655, cysteine 698, histidine 703, and methionine 708. Asparagine 713 and asparagine 757 each carry an N-linked (GlcNAc...) asparagine glycan. Na(+) is bound by residues phenylalanine 768 and glycine 777. Cysteine 876 and cysteine 902 are disulfide-bonded. The N-linked (GlcNAc...) asparagine glycan is linked to asparagine 930. Residues histidine 999, histidine 1002, histidine 1004, histidine 1044, cysteine 1045, histidine 1046, histidine 1050, and methionine 1055 each coordinate Cu(2+). Residues histidine 1002 and histidine 1004 each contribute to the O2 site. Histidine 1046 contacts O2. The chain crosses the membrane as a helical span at residues 1110–1130; the sequence is ALIAICVVLLLIALALGGVVW. The Cytoplasmic segment spans residues 1131–1157; sequence YQHRQRKLRRNRRSILDDSFKLLSLKQ. Serine 1144, serine 1149, and serine 1154 each carry phosphoserine.

Belongs to the multicopper oxidase family. Part of a complex composed of SLC40A1/ferroportin, TF/transferrin and HEPH/hephaestin that transfers iron from cells to transferrin. It depends on Cu cation as a cofactor. As to expression, highly expressed in small intestine and colon.

Its subcellular location is the basolateral cell membrane. The enzyme catalyses 4 Fe(2+) + O2 + 4 H(+) = 4 Fe(3+) + 2 H2O. Plasma membrane ferroxidase that mediates the extracellular conversion of ferrous/Fe(2+) iron into its ferric/Fe(3+) form. Couples ferroportin which specifically exports ferrous/Fe(2+) iron from cells to transferrin that only binds and shuttles extracellular ferric/Fe(3+) iron throughout the body. By helping iron transfer from cells to blood mainly contributes to dietary iron absorption by the intestinal epithelium and more generally regulates iron levels in the body. The protein is Hephaestin of Rattus norvegicus (Rat).